Here is a 111-residue protein sequence, read N- to C-terminus: Translation initiation factor 1A 1 (111 aa).

Residues 1-26 (MTLADLKKPTSRATPSTEETFTRVRT) are disordered. The region spanning 22 to 96 (TRVRTPRREN…EKADVIWKYT (75 aa)) is the S1-like domain.

This sequence belongs to the eIF-1A family.

Its function is as follows. Seems to be required for maximal rate of protein biosynthesis. Enhances ribosome dissociation into subunits and stabilizes the binding of the initiator Met-tRNA(I) to 40 S ribosomal subunits. The sequence is that of Translation initiation factor 1A 1 (eIF1A1) from Methanosarcina acetivorans (strain ATCC 35395 / DSM 2834 / JCM 12185 / C2A).